Here is a 471-residue protein sequence, read N- to C-terminus: Zinc finger protein 385B (471 aa).

A required for induction of apoptosis region spans residues 1–93; that stretch reads MNMANFLRGF…TGSTCHTTTL (93 aa). The Matrin-type 1 zinc-finger motif lies at 34–64; that stretch reads SFCEVCNIQLNSAAQAQVHSNGKSHRKRVKQ. Disordered stretches follow at residues 50-92 and 175-275; these read QVHS…HTTT and HYKG…TVVE. Residues 76 to 92 show a composition bias toward low complexity; the sequence is ASPSSNSSTGSTCHTTT. The interaction with p53/TP53 stretch occupies residues 94 to 471; that stretch reads PALVRTPTLM…TPASILFAPY (378 aa). The Matrin-type 2 zinc-finger motif lies at 157–187; the sequence is ISCNVCQLRFNSDSQAEAHYKGSKHAKKVKA. A compositionally biased stretch (polar residues) spans 206–220; it reads ANPSCSITPITGNNS. A compositionally biased stretch (low complexity) spans 230–250; that stretch reads KASSSSQPSSSESGSFLLKSG. Over residues 260-269 the composition is skewed to polar residues; sequence TSPSKSTNGA. A Matrin-type 3 zinc finger spans residues 282 to 316; that stretch reads KKLLYCSLCKVAVNSLSQLEAHNTGSKHKTMVEAR. A disordered region spans residues 318 to 340; that stretch reads GAGPIKSYPRPGSRLKMQNGSKG. A Matrin-type 4 zinc finger spans residues 348–378; sequence FHCEICDVHVNSEIQLKQHISSRRHKDRVAG.

As to quaternary structure, interacts with p53/TP53; the interaction is direct. In terms of tissue distribution, detected in germinal center of lymph node (at protein level). Expressed in spleen, lymph node and tonsil.

The protein resides in the nucleus. In terms of biological role, may play a role in p53/TP53-mediated apoptosis. This chain is Zinc finger protein 385B (ZNF385B), found in Homo sapiens (Human).